The sequence spans 130 residues: Metastasis-suppressor KiSS-1 (130 aa).

Positions 1 to 19 (MISMASWQLLLLLCVATYG) are cleaved as a signal peptide. The segment at 49-82 (KESRYAESKPGSAGLRARRSSPCPPVEGPAGRQR) is disordered. Residues Cys-71 and Cys-85 are joined by a disulfide bond. Tyr-110 bears the Phosphotyrosine mark. Positions 110 to 119 (YNWNSFGLRY) are essential for receptor binding and receptor activation. Position 119 is a tyrosine amide (Tyr-119).

It belongs to the KISS1 family. In terms of tissue distribution, weak in all tissue types with highest levels in lung and 15- 17-day embryos. Expressed in areas of the hypothalamus implicated in the neuroendocrine regulation of gonadotropin secretion, including the anteroventral periventricular nucleus, the periventricular nucleus, and the arcuate nucleus.

The protein localises to the secreted. In terms of biological role, metastasis suppressor protein. May regulate events downstream of cell-matrix adhesion, perhaps involving cytoskeletal reorganization. Generates a C-terminally amidated peptide, metastin which functions as the endogenous ligand of the G-protein coupled receptor GPR54. Activation of the receptor inhibits cell proliferation and cell migration, key characteristics of tumor metastasis. The receptor is also essential for normal gonadotropin-released hormone physiology and for puberty. The hypothalamic KiSS1/GPR54 system is a pivotal factor in central regulation of the gonadotropic axis at puberty and in adulthood. Intracerebroventricular administration induces an increase in serum LH and FSH levels in prepubertal male and female as well as in adult animals. This is Metastasis-suppressor KiSS-1 (Kiss1) from Mus musculus (Mouse).